A 388-amino-acid polypeptide reads, in one-letter code: Oxytocin receptor (388 aa).

The segment at 1–32 is disordered; sequence MEGTPAANWSVELDLGSGVPPGEEGNRTAGPP. Over 1–38 the chain is Extracellular; that stretch reads MEGTPAANWSVELDLGSGVPPGEEGNRTAGPPQRNEAL. Asn8 and Asn26 each carry an N-linked (GlcNAc...) asparagine glycan. A helical transmembrane segment spans residues 39–63; that stretch reads ARVEVAVLCLILFLALSGNACVLLA. Topologically, residues 64–74 are cytoplasmic; sequence LRTTRHKHSRL. The helical transmembrane segment at 75-97 threads the bilayer; sequence FFFMKHLSIADLVVAVFQVLPQL. At 98 to 113 the chain is on the extracellular side; the sequence is LWDITFRFYGPDLLCR. The cysteines at positions 112 and 187 are disulfide-linked. The helical transmembrane segment at 114 to 135 threads the bilayer; sequence LVKYLQVVGMFASTYLLLLMSL. Residues 136-154 are Cytoplasmic-facing; that stretch reads DRCLAICQPLRSLRRRTDR. A helical membrane pass occupies residues 155-175; it reads LAVLGTWLGCLVASAPQVHIF. Residues 176–202 are Extracellular-facing; that stretch reads SLREVADGVFDCWAVFIQPWGPKAYVT. The helical transmembrane segment at 203–225 threads the bilayer; the sequence is WITLAVYIVPVIVLAACYGLISF. Topologically, residues 226–274 are cytoplasmic; the sequence is KIWQNLRLKTAAAAAAAEGNDAAGGAGRAALARVSSVKLISKAKIRTVK. The chain crosses the membrane as a helical span at residues 275-293; that stretch reads MTFIIVLAFIVCWTPFFFV. Topologically, residues 294–308 are extracellular; that stretch reads QMWSVWDVNAPKEAS. Residues 309–331 traverse the membrane as a helical segment; that stretch reads AFIIAMLLASLNSCCNPWIYMLF. Topologically, residues 332-388 are cytoplasmic; sequence TGHLFHELVQRFFCCSARYLKGSRPGETSVSKKSNSSTFVLSRRSSSQRSCSQPSSA. Residues 354-388 form a disordered region; that stretch reads SRPGETSVSKKSNSSTFVLSRRSSSQRSCSQPSSA. A phosphoserine mark is found at Ser365 and Ser367. Over residues 365–388 the composition is skewed to low complexity; sequence SNSSTFVLSRRSSSQRSCSQPSSA.

It belongs to the G-protein coupled receptor 1 family. Vasopressin/oxytocin receptor subfamily.

It localises to the cell membrane. Functionally, receptor for oxytocin. The activity of this receptor is mediated by G proteins which activate a phosphatidylinositol-calcium second messenger system. This chain is Oxytocin receptor (Oxtr), found in Rattus norvegicus (Rat).